Reading from the N-terminus, the 403-residue chain is Phosphopentomutase (403 aa).

Residues Asp13, Asp298, His303, Asp339, His340, and His351 each coordinate Mn(2+).

Belongs to the phosphopentomutase family. Mn(2+) is required as a cofactor.

It localises to the cytoplasm. The catalysed reaction is 2-deoxy-alpha-D-ribose 1-phosphate = 2-deoxy-D-ribose 5-phosphate. It catalyses the reaction alpha-D-ribose 1-phosphate = D-ribose 5-phosphate. Its pathway is carbohydrate degradation; 2-deoxy-D-ribose 1-phosphate degradation; D-glyceraldehyde 3-phosphate and acetaldehyde from 2-deoxy-alpha-D-ribose 1-phosphate: step 1/2. Functionally, isomerase that catalyzes the conversion of deoxy-ribose 1-phosphate (dRib-1-P) and ribose 1-phosphate (Rib-1-P) to deoxy-ribose 5-phosphate (dRib-5-P) and ribose 5-phosphate (Rib-5-P), respectively. The polypeptide is Phosphopentomutase (Streptococcus pyogenes serotype M12 (strain MGAS2096)).